The chain runs to 331 residues: Phosphate acyltransferase (331 aa).

Belongs to the PlsX family. Homodimer. Probably interacts with PlsY.

It localises to the cytoplasm. The enzyme catalyses a fatty acyl-[ACP] + phosphate = an acyl phosphate + holo-[ACP]. It functions in the pathway lipid metabolism; phospholipid metabolism. Functionally, catalyzes the reversible formation of acyl-phosphate (acyl-PO(4)) from acyl-[acyl-carrier-protein] (acyl-ACP). This enzyme utilizes acyl-ACP as fatty acyl donor, but not acyl-CoA. This Chlorobaculum tepidum (strain ATCC 49652 / DSM 12025 / NBRC 103806 / TLS) (Chlorobium tepidum) protein is Phosphate acyltransferase.